A 437-amino-acid polypeptide reads, in one-letter code: Type II methylase M.HgiEI (437 aa).

Positions 4 to 431 (FRFIDLFAGI…KRLQCVKLFE (428 aa)) constitute an SAM-dependent MTase C5-type domain. Cysteine 75 is an active-site residue.

This sequence belongs to the class I-like SAM-binding methyltransferase superfamily. C5-methyltransferase family.

The enzyme catalyses a 2'-deoxycytidine in DNA + S-adenosyl-L-methionine = a 5-methyl-2'-deoxycytidine in DNA + S-adenosyl-L-homocysteine + H(+). Its function is as follows. A methylase that recognizes the double-stranded sequence 5'-GGWCC-3', methylates C-? on both strands, and protects the DNA from cleavage by the HgiEI endonuclease. This system is more active than isoschizomeric RM.HgiBI. The polypeptide is Type II methylase M.HgiEI (Herpetosiphon aurantiacus (Herpetosiphon giganteus)).